A 211-amino-acid chain; its full sequence is ATP phosphoribosyltransferase (211 aa).

Belongs to the ATP phosphoribosyltransferase family. Short subfamily. As to quaternary structure, heteromultimer composed of HisG and HisZ subunits.

It localises to the cytoplasm. It carries out the reaction 1-(5-phospho-beta-D-ribosyl)-ATP + diphosphate = 5-phospho-alpha-D-ribose 1-diphosphate + ATP. The protein operates within amino-acid biosynthesis; L-histidine biosynthesis; L-histidine from 5-phospho-alpha-D-ribose 1-diphosphate: step 1/9. Catalyzes the condensation of ATP and 5-phosphoribose 1-diphosphate to form N'-(5'-phosphoribosyl)-ATP (PR-ATP). Has a crucial role in the pathway because the rate of histidine biosynthesis seems to be controlled primarily by regulation of HisG enzymatic activity. The polypeptide is ATP phosphoribosyltransferase (Pseudomonas paraeruginosa (strain DSM 24068 / PA7) (Pseudomonas aeruginosa (strain PA7))).